Reading from the N-terminus, the 322-residue chain is MKTLAGLVLGLVIFDAAVTAPTLESINYDSETYDATLEDLDNLYNYENIPVDKVEIEIATVMPSGNRELLTPPPQPEKAQEEEEEEESTPRLIDGSSPQEPEFTGVLGPHTNEDFPTCLLCTCISTTVYCDDHELDAIPPLPKNTAYFYSRFNRIKKINKNDFASLSDLKRIDLTSNLISEIDEDAFRKLPQLRELVLRDNKIRQLPELPTTLTFIDISNNRLGRKGIKQEAFKDMYDLHHLYLTDNNLDHIPLPLPENLRALHLQNNNILEMHEDTFCNVKNLTYIRKALEDIRLDGNPINLSKTPQAYMCLPRLPVGSLV.

The first 19 residues, 1–19 (MKTLAGLVLGLVIFDAAVT), serve as a signal peptide directing secretion. Residue T60 is glycosylated (O-linked (GalNAc...) threonine). An O-linked (Xyl...) (dermatan sulfate) serine glycan is attached at S64. Residues 64 to 101 (SGNRELLTPPPQPEKAQEEEEEEESTPRLIDGSSPQEP) are disordered. S96 carries an O-linked (GalNAc...) serine glycan. Positions 106-143 (VLGPHTNEDFPTCLLCTCISTTVYCDDHELDAIPPLPK) constitute an LRRNT domain. A disulfide bond links C118 and C130. LRR repeat units lie at residues 144–165 (NTAYFYSRFNRIKKINKNDFAS), 168–189 (DLKRIDLTSNLISEIDEDAFRK), 192–213 (QLRELVLRDNKIRQLPELPTTL), 238–258 (DLHHLYLTDNNLDHIPLPLPE), and 259–280 (NLRALHLQNNNILEMHEDTFCN). A disulfide bridge links C279 with C312. Residues N283 and N302 are each glycosylated (N-linked (GlcNAc...) asparagine). An LRR 6 repeat occupies 290 to 310 (ALEDIRLDGNPINLSKTPQAY).

Belongs to the small leucine-rich proteoglycan (SLRP) family. SLRP class III subfamily. In terms of processing, the O-linked polysaccharides on Thr-60 and Ser-96 are probably the mucin type linked to GalNAc. There is one glycosaminoglycan chain, known to be dermatan sulfate, and it is probably the O-glycosylation at Ser-64. Cartilage, ligament, and placenta.

The protein resides in the secreted. It localises to the extracellular space. It is found in the extracellular matrix. Functionally, may have a role in bone formation and also in establishing the ordered structure of cartilage through matrix organization. In Homo sapiens (Human), this protein is Epiphycan (EPYC).